Reading from the N-terminus, the 370-residue chain is Nociceptin receptor (370 aa).

The Extracellular portion of the chain corresponds to 1 to 48; that stretch reads MESLFPAPFWEVLYGSPLQGNLSLLSPNHSLLPPHLLLNASHGAFLPL. Asn-21, Asn-28, and Asn-39 each carry an N-linked (GlcNAc...) asparagine glycan. The chain crosses the membrane as a helical span at residues 49-74; that stretch reads GLKVTIVGLYLAVCVGGLLGNCLVMY. The Cytoplasmic portion of the chain corresponds to 75–87; the sequence is VILRHTKMKTATN. A helical transmembrane segment spans residues 88-109; the sequence is IYIFNLALADTAVLLTLPFQGT. The Extracellular segment spans residues 110 to 124; that stretch reads DVLLGFWPFGNALCK. Cys-123 and Cys-200 are joined by a disulfide. Residues 125 to 146 form a helical membrane-spanning segment; sequence AVIAIDYYNMFTSAFTLTAMSV. Topologically, residues 147-165 are cytoplasmic; that stretch reads DRYVAICHPIRALDVRTSS. A helical transmembrane segment spans residues 166–188; that stretch reads KAQAVNVAIWALASIVGVPVAIM. Residues 189 to 211 are Extracellular-facing; it reads GSAQVEDEEIECLVEIPAPQDYW. Residues 212-236 traverse the membrane as a helical segment; sequence GPVFAVCIFLFSFVIPVLIISVCYS. Residues 237–264 are Cytoplasmic-facing; that stretch reads LMVRRLRGVRLLSGSREKDRNLRRITRL. Residues 265–285 traverse the membrane as a helical segment; the sequence is VLVVVAVFVGCWTPVQVFVLV. Topologically, residues 286-300 are extracellular; that stretch reads QGLGVQPGSETAVAV. Residues 301–322 form a helical membrane-spanning segment; it reads LRFCTALGYVNSCLNPILYAFL. At 323–370 the chain is on the cytoplasmic side; it reads DENFKACFRKFCCAPTRRREMQVSDRVRSIAKDVALACKTSETVPRPA. A lipid anchor (S-palmitoyl cysteine) is attached at Cys-334.

This sequence belongs to the G-protein coupled receptor 1 family. Phosphorylation at Ser-363 requires GRK3. In terms of tissue distribution, detected in brain cortex, stomach, ileum, jejunum and colon.

Its subcellular location is the cell membrane. It is found in the cytoplasmic vesicle. G-protein coupled opioid receptor that functions as a receptor for the endogenous neuropeptide nociceptin. Ligand binding causes a conformation change that triggers signaling via guanine nucleotide-binding proteins (G proteins) and modulates the activity of down-stream effectors. Signaling via G proteins mediates inhibition of adenylate cyclase activity and calcium channel activity. Arrestins modulate signaling via G proteins and mediate the activation of alternative signaling pathways that lead to the activation of MAP kinases. Plays a role in modulating nociception and the perception of pain. Plays a role in the regulation of locomotor activity by the neuropeptide nociceptin. The polypeptide is Nociceptin receptor (OPRL1) (Sus scrofa (Pig)).